The chain runs to 229 residues: Coiled-coil domain-containing protein 134 (229 aa).

Residues 1–22 form the signal peptide; the sequence is MDLLQSLAVFFVLLLPGTEVTG. Asparagine 148 carries an N-linked (GlcNAc...) asparagine glycan. Residues 191-229 are disordered; that stretch reads PSTDPFQKALREEEKRRKKEEKRKEIRKGPRISRSQSEL. Positions 196-218 form a coiled coil; the sequence is FQKALREEEKRRKKEEKRKEIRK. The Prevents secretion from ER motif lies at 226-229; that stretch reads QSEL.

This sequence belongs to the CCDC134 family. As to quaternary structure, interacts with TADA2A. Associates with the PCAF complex via TADA2A binding. Post-translationally, O-glycosylated, with additional sialic acid modifications.

The protein localises to the endoplasmic reticulum lumen. Its subcellular location is the secreted. It is found in the cytoplasm. The protein resides in the nucleus. Its function is as follows. Molecular adapter required to prevent protein hyperglycosylation of HSP90B1: during translation, associates with nascent HSP90B1 and the STT3A catalytic component of the OST-A complex and tethers them to a specialized translocon that forms a microenvironment for HSP90B1 folding. In the CCDC134-containing translocon, STT3A associates with the SRT pseudosubstrate motif of HSP90B1, preventing access to facultative glycosylation sites until folding is completed, preventing hyperglycosylation and subsequent degradation of HSP90B1. In extracellular secreted form, promotes proliferation and activation of CD8(+) T-cells, suggesting a cytokine-like function. May inhibit ERK and JNK signaling activity. May suppress cell migration and invasion activity, via its effects on ERK and JNK signaling. May also localize in the nucleus: enhances stability of the PCAF histone acetyltransferase (HAT) complex member TADA2A and thus promotes PCAF-mediated histone acetyltransferase activity. Has a critical role in the regulation of osteogenesis and bone development. The protein is Coiled-coil domain-containing protein 134 (Ccdc134) of Rattus norvegicus (Rat).